Here is a 217-residue protein sequence, read N- to C-terminus: Large ribosomal subunit protein uL4 (217 aa).

The protein belongs to the universal ribosomal protein uL4 family. In terms of assembly, part of the 50S ribosomal subunit.

Functionally, one of the primary rRNA binding proteins, this protein initially binds near the 5'-end of the 23S rRNA. It is important during the early stages of 50S assembly. It makes multiple contacts with different domains of the 23S rRNA in the assembled 50S subunit and ribosome. Forms part of the polypeptide exit tunnel. This chain is Large ribosomal subunit protein uL4, found in Koribacter versatilis (strain Ellin345).